We begin with the raw amino-acid sequence, 321 residues long: ATP-dependent 6-phosphofructokinase (321 aa).

G11 provides a ligand contact to ATP. 21–25 contributes to the ADP binding site; sequence RAVVR. ATP contacts are provided by residues 72 to 73 and 102 to 105; these read RC and GDGS. Position 103 (D103) interacts with Mg(2+). 126–128 lines the substrate pocket; it reads TID. Catalysis depends on D128, which acts as the Proton acceptor. R155 provides a ligand contact to ADP. Residues R163 and 170-172 contribute to the substrate site; that span reads MGR. ADP-binding positions include 186–188, R212, and 214–216; these read GAE and KLH. Substrate contacts are provided by residues E223, R245, and 251–254; that span reads HIQR.

It belongs to the phosphofructokinase type A (PFKA) family. ATP-dependent PFK group I subfamily. Prokaryotic clade 'B1' sub-subfamily. As to quaternary structure, homotetramer. Requires Mg(2+) as cofactor.

It localises to the cytoplasm. The enzyme catalyses beta-D-fructose 6-phosphate + ATP = beta-D-fructose 1,6-bisphosphate + ADP + H(+). It participates in carbohydrate degradation; glycolysis; D-glyceraldehyde 3-phosphate and glycerone phosphate from D-glucose: step 3/4. Allosterically activated by ADP and other diphosphonucleosides, and allosterically inhibited by phosphoenolpyruvate. Functionally, catalyzes the phosphorylation of D-fructose 6-phosphate to fructose 1,6-bisphosphate by ATP, the first committing step of glycolysis. The chain is ATP-dependent 6-phosphofructokinase from Thermoanaerobacter pseudethanolicus (strain ATCC 33223 / 39E) (Clostridium thermohydrosulfuricum).